A 699-amino-acid chain; its full sequence is Transcription factor MYC2 (699 aa).

The tract at residues proline 25–alanine 60 is disordered. The tract at residues isoleucine 93–glutamate 158 is JAZ-interaction domain. A disordered region spans residues aspartate 290–arginine 530. The segment covering histidine 306–proline 321 has biased composition (polar residues). 2 stretches are compositionally biased toward low complexity: residues proline 335–glutamine 349 and serine 387–leucine 412. Polar residues-rich tracts occupy residues phenylalanine 413–proline 449 and serine 459–threonine 472. A compositionally biased stretch (basic and acidic residues) spans serine 478–serine 494. The Nuclear localization signal motif lies at lysine 506–lysine 514. The span at arginine 507–alanine 516 shows a compositional bias: basic residues. A compositionally biased stretch (basic and acidic residues) spans asparagine 517–arginine 530. The tract at residues glutamate 520–arginine 533 is basic motif; degenerate. The bHLH domain maps to glutamate 520–leucine 569. A helix-loop-helix motif region spans residues glutamate 534–leucine 569. The disordered stretch occupies residues threonine 582 to arginine 611.

Belongs to the bHLH protein family. As to quaternary structure, interacts with TIFY3/JAZ1. Highly expressed in spikelets and floral organs.

Its subcellular location is the nucleus. In terms of biological role, transcriptional activator involved in jasmonate (JA) signaling pathway during spikelet development. Binds to the G2 region G-box (5'-CACGTG-3') of the MADS1 promoter and thus directly regulates the expression of MADS1. Its function in MADS1 activation is abolished by TIFY3/JAZ1 which directly target MYC2 during spikelet development. The polypeptide is Transcription factor MYC2 (Oryza sativa subsp. japonica (Rice)).